Reading from the N-terminus, the 146-residue chain is MSTKKERLDAICGIIQTKVISNQEELLKELEDSGFSVTQATLSRDIKQLKVAKVHDGNGDYVYRLPEESISKQAQPEGKKKPNIEFSGNLAVVKTRPGYAMGIASDIDSHAPSEILATIAGDDTILVIPRNGVSQEKVIAALSHFI.

This sequence belongs to the ArgR family.

Its subcellular location is the cytoplasm. Its pathway is amino-acid biosynthesis; L-arginine biosynthesis [regulation]. In terms of biological role, regulates arginine biosynthesis genes. The chain is Arginine repressor from Parabacteroides distasonis (strain ATCC 8503 / DSM 20701 / CIP 104284 / JCM 5825 / NCTC 11152).